We begin with the raw amino-acid sequence, 152 residues long: Siroheme decarboxylase beta subunit (152 aa).

Belongs to the Ahb/Nir family. Forms a heterodimer composed of AhbA and AhbB.

The catalysed reaction is siroheme + 2 H(+) = 12,18-didecarboxysiroheme + 2 CO2. It participates in porphyrin-containing compound metabolism; protoheme biosynthesis. Binds heme b. The redox state of the heme b modulates the activity of the enzyme. Activity is stimulated by sodium dithionite. In terms of biological role, involved in siroheme-dependent heme b biosynthesis. Catalyzes the decarboxylation of siroheme into didecarboxysiroheme. This Methanosarcina barkeri (strain Fusaro / DSM 804) protein is Siroheme decarboxylase beta subunit.